A 278-amino-acid polypeptide reads, in one-letter code: Transmembrane protein 41B (278 aa).

A disordered region spans residues 1–31 (MQVHERSHTGGHTCQCNHGSEKKAPATGKVH). The next 6 helical transmembrane spans lie at 39–59 (MSLL…FLVY), 96–116 (FYVE…TFAI), 132–154 (FPLA…YLLS), 184–204 (LINY…FINI), 212–232 (PLKV…FVAI), and 249–269 (SWNS…PAIF). Positions 127-238 (GFLYPFPLAL…FVAIKAGTTL (112 aa)) are VTT domain; required for its function in autophagy.

The protein belongs to the TMEM41 family.

It localises to the endoplasmic reticulum membrane. The protein localises to the endomembrane system. The catalysed reaction is a 1,2-diacyl-sn-glycero-3-phospho-L-serine(in) = a 1,2-diacyl-sn-glycero-3-phospho-L-serine(out). The enzyme catalyses cholesterol(in) = cholesterol(out). It carries out the reaction a 1,2-diacyl-sn-glycero-3-phosphocholine(in) = a 1,2-diacyl-sn-glycero-3-phosphocholine(out). It catalyses the reaction a 1,2-diacyl-sn-glycero-3-phosphoethanolamine(in) = a 1,2-diacyl-sn-glycero-3-phosphoethanolamine(out). Functionally, phospholipid scramblase involved in lipid homeostasis and membrane dynamics processes. Has phospholipid scramblase activity toward cholesterol and phosphatidylserine, as well as phosphatidylethanolamine and phosphatidylcholine. Required for autophagosome formation: participates in early stages of autophagosome biogenesis at the endoplasmic reticulum (ER) membrane by reequilibrating the leaflets of the ER as lipids are extracted by atg2 (atg2a or atg2b) to mediate autophagosome assembly. In addition to autophagy, involved in other processes in which phospholipid scramblase activity is required. Required for normal motor neuron development. This is Transmembrane protein 41B from Xenopus tropicalis (Western clawed frog).